A 390-amino-acid polypeptide reads, in one-letter code: Monomeric sarcosine oxidase (390 aa).

Residue 6 to 36 coordinates FAD; that stretch reads DVIVVGAGSMGMAAGYQLAKQGVKTLLVDAF. C316 carries the S-8alpha-FAD cysteine modification.

Monomer. The cofactor is FAD.

It localises to the cytoplasm. It carries out the reaction sarcosine + O2 + H2O = formaldehyde + glycine + H2O2. With respect to regulation, pyrrole-2-carboxylate is a competitive inhibitor. N-(cyclopropyl)glycine (CPG) is a mechanism-based inhibitor and inactivates the enzyme by covalently modifying the flavin. Catalyzes the oxidative demethylation of sarcosine. Can also oxidize other secondary amino acids such as N-methyl-L-alanine. The chain is Monomeric sarcosine oxidase (soxA) from Bacillus sp. (strain B-0618).